Consider the following 578-residue polypeptide: Transmembrane protein 121B (578 aa).

2 disordered regions span residues 1–84 and 106–129; these read MRPA…ESLS and AGPA…PTSS. Composition is skewed to low complexity over residues 8 to 17 and 44 to 53; these read PRSVSSASGS and GDSSTSTSTS. A compositionally biased stretch (gly residues) spans 54–67; the sequence is RGGGGGRRGGGGGS. A Phosphoserine modification is found at S167. The disordered stretch occupies residues 529–557; it reads RARGGYGAPPSAPPPPPPPPQGGSQLGHC. Over residues 538–549 the composition is skewed to pro residues; sequence PSAPPPPPPPPQ. Phosphoserine is present on S552.

The protein belongs to the TMEM121 family. Widely expressed, especially in adult heart, brain, prostate, testes, peripherical blood leukocytes and fetal brain.

In Homo sapiens (Human), this protein is Transmembrane protein 121B.